Here is a 412-residue protein sequence, read N- to C-terminus: D-amino acid dehydrogenase 3 (412 aa).

4-18 (IVVIGAGIAGVSTAY) provides a ligand contact to FAD.

It belongs to the DadA oxidoreductase family. Requires FAD as cofactor.

The enzyme catalyses a D-alpha-amino acid + A + H2O = a 2-oxocarboxylate + AH2 + NH4(+). Its function is as follows. Oxidative deamination of D-amino acids. The protein is D-amino acid dehydrogenase 3 (dadA3) of Mesorhizobium japonicum (strain LMG 29417 / CECT 9101 / MAFF 303099) (Mesorhizobium loti (strain MAFF 303099)).